The following is a 742-amino-acid chain: 5-methyltetrahydropteroyltriglutamate--homocysteine methyltransferase (742 aa).

5-methyltetrahydropteroyltri-L-glutamate is bound by residues 18 to 21 (REWK) and K112. Residues 420-422 (IGS) and E473 contribute to the L-homocysteine site. L-methionine-binding positions include 420–422 (IGS) and E473. A 5-methyltetrahydropteroyltri-L-glutamate-binding site is contributed by W550. D588 contributes to the L-homocysteine binding site. L-methionine is bound at residue D588. E594 contributes to the 5-methyltetrahydropteroyltri-L-glutamate binding site. 3 residues coordinate Zn(2+): H630, C632, and E654. H683 serves as the catalytic Proton donor. Position 715 (C715) interacts with Zn(2+).

The protein belongs to the vitamin-B12 independent methionine synthase family. It depends on Zn(2+) as a cofactor.

The enzyme catalyses 5-methyltetrahydropteroyltri-L-glutamate + L-homocysteine = tetrahydropteroyltri-L-glutamate + L-methionine. It participates in amino-acid biosynthesis; L-methionine biosynthesis via de novo pathway; L-methionine from L-homocysteine (MetE route): step 1/1. Its function is as follows. Catalyzes the transfer of a methyl group from 5-methyltetrahydrofolate to homocysteine resulting in methionine formation. In Staphylococcus aureus (strain JH9), this protein is 5-methyltetrahydropteroyltriglutamate--homocysteine methyltransferase.